The primary structure comprises 156 residues: Small ribosomal subunit protein uS7 (156 aa).

The protein belongs to the universal ribosomal protein uS7 family. As to quaternary structure, part of the 30S ribosomal subunit. Contacts proteins S9 and S11.

Functionally, one of the primary rRNA binding proteins, it binds directly to 16S rRNA where it nucleates assembly of the head domain of the 30S subunit. Is located at the subunit interface close to the decoding center, probably blocks exit of the E-site tRNA. This chain is Small ribosomal subunit protein uS7, found in Histophilus somni (strain 129Pt) (Haemophilus somnus).